Reading from the N-terminus, the 360-residue chain is Geranylgeranyl pyrophosphate synthase 9, chloroplastic (360 aa).

A chloroplast-targeting transit peptide spans 1-39 (MATTVHLSSSSLFSQSRGRRDNSISSVKSLRKRTVLSLS). The isopentenyl diphosphate site is built by Lys106, Arg109, and His138. Residues Asp145 and Asp151 each contribute to the Mg(2+) site. Arg156 is a dimethylallyl diphosphate binding site. Arg157 is a binding site for isopentenyl diphosphate. Dimethylallyl diphosphate contacts are provided by Lys245, Thr246, Gln283, Lys300, and Lys310.

The protein belongs to the FPP/GGPP synthase family. Monomer. No interactions with GGR. Mg(2+) serves as cofactor.

It localises to the plastid. The protein localises to the chloroplast. It catalyses the reaction isopentenyl diphosphate + dimethylallyl diphosphate = (2E)-geranyl diphosphate + diphosphate. The enzyme catalyses isopentenyl diphosphate + (2E)-geranyl diphosphate = (2E,6E)-farnesyl diphosphate + diphosphate. It carries out the reaction isopentenyl diphosphate + (2E,6E)-farnesyl diphosphate = (2E,6E,10E)-geranylgeranyl diphosphate + diphosphate. It functions in the pathway isoprenoid biosynthesis; farnesyl diphosphate biosynthesis; farnesyl diphosphate from geranyl diphosphate and isopentenyl diphosphate: step 1/1. Its pathway is isoprenoid biosynthesis; geranyl diphosphate biosynthesis; geranyl diphosphate from dimethylallyl diphosphate and isopentenyl diphosphate: step 1/1. The protein operates within isoprenoid biosynthesis; geranylgeranyl diphosphate biosynthesis; geranylgeranyl diphosphate from farnesyl diphosphate and isopentenyl diphosphate: step 1/1. Its function is as follows. Catalyzes the trans-addition of the three molecules of IPP onto DMAPP to form geranylgeranyl pyrophosphate. The chain is Geranylgeranyl pyrophosphate synthase 9, chloroplastic (GGPPS9) from Arabidopsis thaliana (Mouse-ear cress).